Reading from the N-terminus, the 186-residue chain is Elongation factor P (186 aa).

Lys33 bears the N6-(3,6-diaminohexanoyl)-5-hydroxylysine mark.

Belongs to the elongation factor P family. In terms of processing, may be beta-lysylated on the epsilon-amino group of Lys-33 by the combined action of EpmA and EpmB, and then hydroxylated on the C5 position of the same residue by EpmC (if this protein is present). Lysylation is critical for the stimulatory effect of EF-P on peptide-bond formation. The lysylation moiety may extend toward the peptidyltransferase center and stabilize the terminal 3-CCA end of the tRNA. Hydroxylation of the C5 position on Lys-33 may allow additional potential stabilizing hydrogen-bond interactions with the P-tRNA.

It is found in the cytoplasm. Its pathway is protein biosynthesis; polypeptide chain elongation. Involved in peptide bond synthesis. Alleviates ribosome stalling that occurs when 3 or more consecutive Pro residues or the sequence PPG is present in a protein, possibly by augmenting the peptidyl transferase activity of the ribosome. Modification of Lys-33 is required for alleviation. The polypeptide is Elongation factor P (Acidithiobacillus ferrooxidans (strain ATCC 23270 / DSM 14882 / CIP 104768 / NCIMB 8455) (Ferrobacillus ferrooxidans (strain ATCC 23270))).